Consider the following 101-residue polypeptide: Large ribosomal subunit protein uL23 (101 aa).

This sequence belongs to the universal ribosomal protein uL23 family. Part of the 50S ribosomal subunit. Contacts protein L29, and trigger factor when it is bound to the ribosome.

In terms of biological role, one of the early assembly proteins it binds 23S rRNA. One of the proteins that surrounds the polypeptide exit tunnel on the outside of the ribosome. Forms the main docking site for trigger factor binding to the ribosome. This is Large ribosomal subunit protein uL23 from Rhodococcus jostii (strain RHA1).